Here is a 117-residue protein sequence, read N- to C-terminus: Protein OPG035 (117 aa).

Belongs to the poxviridae OPG035 family.

Functionally, bcl-2-like protein which contributes to virulence by preventing host NF-kappa-B activation in response to pro-inflammatory stimuli such as TNF-alpha or IL1B. This chain is Protein OPG035 (OPG035), found in Bos taurus (Bovine).